The following is a 444-amino-acid chain: MSSVKRSLNQEIISQFHYSAAEGDIAKLTAILSHSPSLLNETSENGWSALICDRSIVNKSRQTALDIAKFWGYKHIANLLANAKGGKKPWFLTNEVEECENYFSKTLLDRKSEKRNNSDWLLAKESHPATVYILFSDLNPLVTLGGNKESFQQPEVRLCQLNYTDIKDYLAQPEKITLIFLGVELEMKKEFFNYAGEISKEEEDGLVAWFALGIDTVAAEEFKQRHENCYFLHPPMPALLQLKEKEAGVVAQARSVLAWHSRYKFCPTCGNATKIEEGGYKRVCLKEDCPSLHGVHNTSYPRVDPVVIMQVIHPDGTKCLLGRQKRFPPGMFTCLAGFIEPGETIEDAVRREVEEESGVKVGHVQYVSCQPWPMPSSLMIGCLAVAVSTEIKVDKNEIEDARWFTREQVVDVLTKGKQQAFFVPPSRAIAHQLIKHWIGMNPNL.

ANK repeat units follow at residues 11–40 (EIISQFHYSAAEGDIAKLTAILSHSPSLLN) and 60–80 (SRQTALDIAKFWGYKHIANLL). K167 is subject to N6-succinyllysine. Zn(2+) contacts are provided by C266 and C269. At K274 the chain carries N6-succinyllysine. The Zn(2+) site is built by C284 and C289. Residues Y300, 336 to 338 (AGF), E352, E356, and E397 contribute to the substrate site. The Nudix hydrolase domain maps to 301 to 435 (PRVDPVVIMQ…SRAIAHQLIK (135 aa)). A336, E352, E356, and E397 together coordinate Mg(2+). Positions 337–358 (GFIEPGETIEDAVRREVEEESG) match the Nudix box motif. A Microbody targeting signal motif is present at residues 442–444 (PNL).

It belongs to the Nudix hydrolase family. NudC subfamily. In terms of assembly, homodimer. Homodimerization is essential for its catalytic activity and protein stability. Interacts (via ANK repeats) with BLMH. Requires Mg(2+) as cofactor. Zn(2+) is required as a cofactor.

The protein localises to the cytoplasm. It is found in the peroxisome. Its subcellular location is the cytoplasmic granule. The catalysed reaction is a 5'-end NAD(+)-phospho-ribonucleoside in mRNA + H2O = a 5'-end phospho-adenosine-phospho-ribonucleoside in mRNA + beta-nicotinamide D-ribonucleotide + 2 H(+). The enzyme catalyses NAD(+) + H2O = beta-nicotinamide D-ribonucleotide + AMP + 2 H(+). It carries out the reaction NADH + H2O = reduced beta-nicotinamide D-ribonucleotide + AMP + 2 H(+). It catalyses the reaction NADPH + H2O = reduced beta-nicotinamide D-ribonucleotide + adenosine 2',5'-bisphosphate + 2 H(+). Functionally, mRNA decapping enzyme that specifically removes the nicotinamide adenine dinucleotide (NAD) cap from a subset of mRNAs by hydrolyzing the diphosphate linkage to produce nicotinamide mononucleotide (NMN) and 5' monophosphate mRNA. The NAD-cap is present at the 5'-end of some RNAs; in contrast to the canonical N7 methylguanosine (m7G) cap, the NAD cap promotes mRNA decay. Preferentially acts on NAD-capped transcripts in response to nutrient stress. Also acts on free nicotinamide adenine dinucleotide molecules: hydrolyzes NAD(H) into NMN(H) and AMP, and NADPH into NMNH and 2',5'-ADP. May act to regulate the concentration of peroxisomal nicotinamide nucleotide cofactors required for oxidative metabolism in this organelle. Regulates the levels of circadian clock components PER1, PER2, PER3 and CRY2 in the liver. This Bos taurus (Bovine) protein is NAD-capped RNA hydrolase NUDT12.